The following is a 302-amino-acid chain: Recombination-associated protein RdgC (302 aa).

Belongs to the RdgC family.

It localises to the cytoplasm. The protein localises to the nucleoid. In terms of biological role, may be involved in recombination. This chain is Recombination-associated protein RdgC, found in Haemophilus influenzae (strain PittGG).